The following is a 71-amino-acid chain: uncharacterized protein (71 aa).

Over 1 to 16 (MLLLYTVMILTCIIYK) the chain is Cytoplasmic. A helical transmembrane segment spans residues 17 to 38 (LVPDNKYWPIHMFFFIMIYIVY). Residues 39-69 (MYEKLDIHEKSQFWNYTMARLSGHPVPTIIC) are Extracellular-facing. N-linked (GlcNAc...) asparagine; by host glycosylation occurs at Asn-53.

The protein belongs to the asfivirus X69R family.

Its subcellular location is the host membrane. This is an uncharacterized protein from African swine fever virus (isolate Pig/Kenya/KEN-50/1950) (ASFV).